We begin with the raw amino-acid sequence, 167 residues long: G/U mismatch-specific DNA glycosylase (167 aa).

This sequence belongs to the uracil-DNA glycosylase (UDG) superfamily. TDG/mug family. In terms of assembly, binds DNA as a monomer.

The protein resides in the cytoplasm. It carries out the reaction Specifically hydrolyzes mismatched double-stranded DNA and polynucleotides, releasing free uracil.. Functionally, excises ethenocytosine and uracil, which can arise by alkylation or deamination of cytosine, respectively, from the corresponding mispairs with guanine in ds-DNA. It is capable of hydrolyzing the carbon-nitrogen bond between the sugar-phosphate backbone of the DNA and the mispaired base. The complementary strand guanine functions in substrate recognition. Required for DNA damage lesion repair in stationary-phase cells. In Pectobacterium atrosepticum (strain SCRI 1043 / ATCC BAA-672) (Erwinia carotovora subsp. atroseptica), this protein is G/U mismatch-specific DNA glycosylase.